The chain runs to 359 residues: MSEVLITGLRTRAVNVPLAYPVHTAVGTVGTAPLVLIDLATSAGVVGHSYLFAYTPVALKSLKQLLDDMAAMIVNEPLAPVSLEAMLAKRFCLAGYTGLIRMAAAGIDMAAWDALGKVHETPLVKLLGANARPVQAYDSHSLDGVKLATERAVTAAELGFRAVKTKIGYPALDQDLAVVRSIRQAVGDDFGIMVDYNQSLDVPAAIKRSQALQQEGVTWIEEPTLQHDYEGHQRIQSKLNVPVQMGENWLGPEEMFKALSIGACRLAMPDAMKIGGVTGWIRASALAQQFGIPMSSHLFQEISAHLLAATPTAHWLERLDLAGSVIEPTLTFEGGNAVIPDLPGVGIIWREKEIGKYLV.

Catalysis depends on Lys-166, which acts as the Proton acceptor; specific for S-mandelate. 3 residues coordinate Mg(2+): Asp-195, Glu-221, and Glu-247. His-297 serves as the catalytic Proton acceptor; specific for R-mandelate. Residue Glu-317 coordinates substrate.

It belongs to the mandelate racemase/muconate lactonizing enzyme family. In terms of assembly, homooctamer. It depends on Mg(2+) as a cofactor.

The enzyme catalyses (S)-mandelate = (R)-mandelate. It participates in aromatic compound metabolism; (R)-mandelate degradation; benzoate from (R)-mandelate: step 1/4. In Pseudomonas putida (Arthrobacter siderocapsulatus), this protein is Mandelate racemase (mdlA).